Reading from the N-terminus, the 218-residue chain is MKFFIDTANLEQIQEAYDLGVLDGVTTNPSLMAKEGIKGTENQREHYIKICKIVNADVSAEVIATDYEGMIREGEELAALNPHIVVKVPCIADGIKAIKYFTEKGIRTNCTLVFSVGQALLAAKAGATYVSPFVGRLDDICEDGVGLVGDIVRMYRTYDYKTQVLAASIRNTKHIIECVEVGADVATCPLSAIKGLLNHPLTDSGLKKFLEDYKKVNG.

The active-site Schiff-base intermediate with substrate is Lys87.

This sequence belongs to the transaldolase family. Type 3B subfamily.

The protein resides in the cytoplasm. It carries out the reaction D-sedoheptulose 7-phosphate + D-glyceraldehyde 3-phosphate = D-erythrose 4-phosphate + beta-D-fructose 6-phosphate. The protein operates within carbohydrate degradation; pentose phosphate pathway; D-glyceraldehyde 3-phosphate and beta-D-fructose 6-phosphate from D-ribose 5-phosphate and D-xylulose 5-phosphate (non-oxidative stage): step 2/3. Its function is as follows. Transaldolase is important for the balance of metabolites in the pentose-phosphate pathway. This chain is Probable transaldolase, found in Bacteroides thetaiotaomicron (strain ATCC 29148 / DSM 2079 / JCM 5827 / CCUG 10774 / NCTC 10582 / VPI-5482 / E50).